We begin with the raw amino-acid sequence, 279 residues long: Tryptophan synthase alpha chain (279 aa).

Residues glutamate 49 and aspartate 60 each act as proton acceptor in the active site.

Belongs to the TrpA family. In terms of assembly, tetramer of two alpha and two beta chains.

It carries out the reaction (1S,2R)-1-C-(indol-3-yl)glycerol 3-phosphate + L-serine = D-glyceraldehyde 3-phosphate + L-tryptophan + H2O. The protein operates within amino-acid biosynthesis; L-tryptophan biosynthesis; L-tryptophan from chorismate: step 5/5. Its function is as follows. The alpha subunit is responsible for the aldol cleavage of indoleglycerol phosphate to indole and glyceraldehyde 3-phosphate. The sequence is that of Tryptophan synthase alpha chain from Nitrosospira multiformis (strain ATCC 25196 / NCIMB 11849 / C 71).